A 138-amino-acid chain; its full sequence is Ribosome-binding factor A (138 aa).

Belongs to the RbfA family. As to quaternary structure, monomer. Binds 30S ribosomal subunits, but not 50S ribosomal subunits or 70S ribosomes.

The protein localises to the cytoplasm. In terms of biological role, one of several proteins that assist in the late maturation steps of the functional core of the 30S ribosomal subunit. Associates with free 30S ribosomal subunits (but not with 30S subunits that are part of 70S ribosomes or polysomes). Required for efficient processing of 16S rRNA. May interact with the 5'-terminal helix region of 16S rRNA. The protein is Ribosome-binding factor A of Bradyrhizobium sp. (strain ORS 278).